Reading from the N-terminus, the 324-residue chain is Homeobox protein Nkx-2.5 (324 aa).

Positions 138 to 197 (RRKPRVLFSQAQVYELERRFKQQRYLSAPERDQLASVLKLTSTQVKIWFQNRRYKCKRQR) form a DNA-binding region, homeobox.

Belongs to the NK-2 homeobox family. As to quaternary structure, homodimer (via the homeobox); binds DNA as homodimer. Interacts (via the homeobox) with TBX5 (via the T-box); this complex binds DNA. Interacts with HIPK1 and HIPK2, but not HIPK3. Interacts with the C-terminal zinc finger of GATA4 through its homeobox domain. Also interacts with JARID2 which represses its ability to activate transcription of ANF. Interacts with FBLIM1. Interacts with TBX18. Interacts with histone methyltransferase NSD2 (via HMG box). Interacts with NEDD9. Interacts with TBX1. Expressed only in the heart.

The protein resides in the nucleus. Functionally, transcription factor required for the development of the heart and the spleen. During heart development, acts as a transcriptional activator of NPPA/ANF in cooperation with GATA4. May cooperate with TBX2 to negatively modulate expression of NPPA/ANF in the atrioventricular canal. Binds to the core DNA motif of NPPA promoter. Together with PBX1, required for spleen development through a mechanism that involves CDKN2B repression. Positively regulates transcription of genes such as COL3A1 and MMP2, resulting in increased pulmonary endothelial fibrosis in response to hypoxia. The chain is Homeobox protein Nkx-2.5 (NKX2-5) from Homo sapiens (Human).